The chain runs to 540 residues: Malolactic enzyme (540 aa).

Residue Y90 is the Proton donor of the active site. K163 (proton acceptor) is an active-site residue. Substrate is bound at residue K163. Residues E234, D235, and D258 each contribute to the Mn(2+) site. Residues 291–294 (GGSA), N403, and N448 contribute to the NAD(+) site. N448 contacts substrate.

This sequence belongs to the malic enzymes family. In terms of assembly, homodimer. The cofactor is Mn(2+). Requires NAD(+) as cofactor.

It carries out the reaction (S)-malate + H(+) = (S)-lactate + CO2. Involved in the malolactic fermentation (MLF) of wine, which results in a natural decrease in acidity and favorable changes in wine flavors. Catalyzes the decarboxylation of L-malate to L-lactate. This is Malolactic enzyme from Lactococcus lactis subsp. lactis (strain IL1403) (Streptococcus lactis).